Here is a 90-residue protein sequence, read N- to C-terminus: Protein RALF-like 3 (90 aa).

An N-terminal signal peptide occupies residues 1–29 (MSNLRGTNRFILVAVLVSFVFLSIMNAEA). Cystine bridges form between Cys59–Cys67 and Cys80–Cys86.

It belongs to the plant rapid alkalinization factor (RALF) family.

The protein resides in the secreted. Its function is as follows. Cell signaling peptide that may regulate plant stress, growth, and development. Mediates a rapid alkalinization of extracellular space by mediating a transient increase in the cytoplasmic Ca(2+) concentration leading to a calcium-dependent signaling events through a cell surface receptor and a concomitant activation of some intracellular mitogen-activated protein kinases. This chain is Protein RALF-like 3 (RALFL3), found in Arabidopsis thaliana (Mouse-ear cress).